An 854-amino-acid chain; its full sequence is Envelope glycoprotein gp150 (854 aa).

Topologically, residues 1–783 are extracellular; the sequence is MAEGFAANRQ…WIGKIPQYLK (783 aa). N-linked (GlcNAc...) asparagine; by host glycans are attached at residues Asn-220, Asn-258, Asn-269, Asn-274, Asn-298, Asn-330, Asn-336, Asn-342, Asn-418, Asn-422, Asn-448, Asn-469, Asn-481, Asn-499, Asn-518, Asn-531, Asn-548, and Asn-551. The tract at residues 614–634 is fusion peptide; it reads IMLALATVLSIAGAGTGATAI. Residues 641–691 adopt a coiled-coil conformation; that stretch reads QQVLATHQEALDKITEALKINNLRLVTLEHQMLVIGLKVEAIEKFLYTAFA. Residues 660-678 are immunosuppression; that stretch reads INNLRLVTLEHQMLVIGLK. N-linked (GlcNAc...) asparagine; by host glycosylation is found at Asn-715, Asn-719, Asn-727, and Asn-735. Residues 734–770 are a coiled coil; that stretch reads YNQTKYLQQKFYEIIMDIEQNNVQGKQGLQKLQNWQD. The helical transmembrane segment at 784-804 threads the bilayer; it reads GLLGGILGIGLGILLLILCLP. Topologically, residues 805–854 are cytoplasmic; that stretch reads TLVDCIRNCISKVLGYTVIAMPEIDDEEETVQMELRKNGRQCGMSEKEEE.

The mature envelope protein (Env) consists of a trimer of SU-TM heterodimers attached by non-covalent interactions or by a labile interchain disulfide bond. Post-translationally, specific enzymatic cleavages in vivo yield mature proteins. Envelope glycoproteins are synthesized as an inactive precursor that is N-glycosylated and processed likely by host cell furin or by a furin-like protease in the Golgi to yield the mature SU and TM proteins. The cleavage site between SU and TM requires the minimal sequence [KR]-X-[KR]-R.

It localises to the virion membrane. It is found in the host cell membrane. Functionally, the surface protein (SU) attaches the virus to the host cell by binding to its receptor. This interaction triggers the refolding of the transmembrane protein (TM) and is thought to activate its fusogenic potential by unmasking its fusion peptide. Fusion occurs at the host cell plasma membrane. In terms of biological role, the transmembrane protein (TM) acts as a class I viral fusion protein. Under the current model, the protein has at least 3 conformational states: pre-fusion native state, pre-hairpin intermediate state, and post-fusion hairpin state. During viral and target cell membrane fusion, the coiled coil regions (heptad repeats) assume a trimer-of-hairpins structure, positioning the fusion peptide in close proximity to the C-terminal region of the ectodomain. The formation of this structure appears to drive apposition and subsequent fusion of viral and target cell membranes. Membranes fusion leads to delivery of the nucleocapsid into the cytoplasm. The polypeptide is Envelope glycoprotein gp150 (env) (Feline immunodeficiency virus (strain San Diego) (FIV)).